Consider the following 303-residue polypeptide: Glycine--tRNA ligase alpha subunit (303 aa).

The protein belongs to the class-II aminoacyl-tRNA synthetase family. In terms of assembly, tetramer of two alpha and two beta subunits.

It localises to the cytoplasm. The enzyme catalyses tRNA(Gly) + glycine + ATP = glycyl-tRNA(Gly) + AMP + diphosphate. The chain is Glycine--tRNA ligase alpha subunit from Klebsiella pneumoniae subsp. pneumoniae (strain ATCC 700721 / MGH 78578).